The following is a 481-amino-acid chain: F-box protein At1g49360 (481 aa).

Residues 105 to 156 (LKEDLFLPSDLVRLILSRLSFKDNIRSSTVCKAWGDIAASVRVKSRRCWLLY) form the F-box domain.

The polypeptide is F-box protein At1g49360 (Arabidopsis thaliana (Mouse-ear cress)).